Reading from the N-terminus, the 368-residue chain is Phospho-N-acetylmuramoyl-pentapeptide-transferase (368 aa).

9 consecutive transmembrane segments (helical) span residues 23–43, 72–92, 94–114, 139–159, 170–190, 201–221, 238–258, 265–286, and 345–365; these read YITFRAGAAAVTALIIILVFG, IPTMGGLMIILAIEVSGLLWA, IAEPFVWMVLLAIIWMGAVGF, VALGLIIGGYTFFDPTLSVLL, ITVDYGIWYIPLAIFIVTAVS, GLAAGSTAISVFSLAGFAYLT, AGEVTILSMAIVAACIGFLWF, VFMGDTGSLALGSAVAVIALLI, and KIVIRFWIIEVLLVLTSLLTL.

It belongs to the glycosyltransferase 4 family. MraY subfamily. The cofactor is Mg(2+).

It localises to the cell inner membrane. The enzyme catalyses UDP-N-acetyl-alpha-D-muramoyl-L-alanyl-gamma-D-glutamyl-meso-2,6-diaminopimeloyl-D-alanyl-D-alanine + di-trans,octa-cis-undecaprenyl phosphate = di-trans,octa-cis-undecaprenyl diphospho-N-acetyl-alpha-D-muramoyl-L-alanyl-D-glutamyl-meso-2,6-diaminopimeloyl-D-alanyl-D-alanine + UMP. The protein operates within cell wall biogenesis; peptidoglycan biosynthesis. Functionally, catalyzes the initial step of the lipid cycle reactions in the biosynthesis of the cell wall peptidoglycan: transfers peptidoglycan precursor phospho-MurNAc-pentapeptide from UDP-MurNAc-pentapeptide onto the lipid carrier undecaprenyl phosphate, yielding undecaprenyl-pyrophosphoryl-MurNAc-pentapeptide, known as lipid I. The sequence is that of Phospho-N-acetylmuramoyl-pentapeptide-transferase from Chloroherpeton thalassium (strain ATCC 35110 / GB-78).